A 198-amino-acid chain; its full sequence is Carnitine operon protein CaiE (198 aa).

The interval 174–198 (KPLTQAEENRPRLKGTTDVKPKSAQ) is disordered. Residues 180 to 198 (EENRPRLKGTTDVKPKSAQ) are compositionally biased toward basic and acidic residues.

This sequence belongs to the transferase hexapeptide repeat family.

It participates in amine and polyamine metabolism; carnitine metabolism. Functionally, overproduction of CaiE stimulates the activity of CaiB and CaiD. This chain is Carnitine operon protein CaiE, found in Salmonella dublin (strain CT_02021853).